The chain runs to 787 residues: DNA ligase (787 aa).

Residues 32-36 (DVEYD), 81-82 (SL), and glutamate 121 contribute to the NAD(+) site. Catalysis depends on lysine 123, which acts as the N6-AMP-lysine intermediate. Residues arginine 144, glutamate 181, lysine 297, and lysine 321 each contribute to the NAD(+) site. Residues cysteine 415, cysteine 418, cysteine 445, and cysteine 451 each contribute to the Zn(2+) site. A BRCT domain is found at 703 to 787 (VEGLPLAGQT…RLTELGVAVD (85 aa)).

It belongs to the NAD-dependent DNA ligase family. LigA subfamily. Mg(2+) serves as cofactor. Requires Mn(2+) as cofactor.

It catalyses the reaction NAD(+) + (deoxyribonucleotide)n-3'-hydroxyl + 5'-phospho-(deoxyribonucleotide)m = (deoxyribonucleotide)n+m + AMP + beta-nicotinamide D-nucleotide.. Functionally, DNA ligase that catalyzes the formation of phosphodiester linkages between 5'-phosphoryl and 3'-hydroxyl groups in double-stranded DNA using NAD as a coenzyme and as the energy source for the reaction. It is essential for DNA replication and repair of damaged DNA. This chain is DNA ligase, found in Pseudomonas savastanoi pv. phaseolicola (strain 1448A / Race 6) (Pseudomonas syringae pv. phaseolicola (strain 1448A / Race 6)).